Here is a 198-residue protein sequence, read N- to C-terminus: A-type ATP synthase subunit E (198 aa).

The protein belongs to the V-ATPase E subunit family. In terms of assembly, has multiple subunits with at least A(3), B(3), C, D, E, F, H, I and proteolipid K(x).

The protein localises to the cell membrane. Component of the A-type ATP synthase that produces ATP from ADP in the presence of a proton gradient across the membrane. The protein is A-type ATP synthase subunit E of Pyrococcus furiosus (strain ATCC 43587 / DSM 3638 / JCM 8422 / Vc1).